We begin with the raw amino-acid sequence, 367 residues long: Undecaprenyl-phosphate alpha-N-acetylglucosaminyl 1-phosphate transferase (367 aa).

Transmembrane regions (helical) follow at residues 3-23 (LLTVSTDLISIFLFTTLFLFF), 46-66 (LIPLVGGISVYAGICFTFGIV), 69-89 (YIPHASLYLACAGVLVFIGAL), 132-152 (VLGPFGYFLTLFAVWAAINAF), 158-178 (IDGLLGGLSCVSFAAIGMILW), 187-207 (IWCFAMIAAILPYIMLNLGIL), 213-233 (VFMGDAGSTLIGFTVIWILLE), 242-262 (ISPVTALWIIAIPLMDMVAIM), 294-314 (AFVLITLAAALLASIGVLAEY), and 318-338 (VPEWVMLVLFLLAFFLYGYCI).

It belongs to the glycosyltransferase 4 family. WecA subfamily. Mg(2+) is required as a cofactor. Requires Mn(2+) as cofactor.

The protein resides in the cell inner membrane. It catalyses the reaction di-trans,octa-cis-undecaprenyl phosphate + UDP-N-acetyl-alpha-D-glucosamine = N-acetyl-alpha-D-glucosaminyl-di-trans,octa-cis-undecaprenyl diphosphate + UMP. The protein operates within bacterial outer membrane biogenesis; LPS O-antigen biosynthesis. It participates in bacterial outer membrane biogenesis; enterobacterial common antigen biosynthesis. Catalyzes the transfer of the GlcNAc-1-phosphate moiety from UDP-GlcNAc onto the carrier lipid undecaprenyl phosphate (C55-P), yielding GlcNAc-pyrophosphoryl-undecaprenyl (GlcNAc-PP-C55). This chain is Undecaprenyl-phosphate alpha-N-acetylglucosaminyl 1-phosphate transferase, found in Escherichia coli O6:H1 (strain CFT073 / ATCC 700928 / UPEC).